Reading from the N-terminus, the 511-residue chain is Kinesin-like protein 8 (511 aa).

Residues 5–356 form the Kinesin motor domain; the sequence is NVRVIVRVRP…LRYSEAARRI (352 aa). Residue 107 to 114 coordinates ATP; that stretch reads GQKGTGKT. Phosphoserine is present on residues S278, S279, S284, and S456. Residues 373–489 are a coiled coil; that stretch reads EGELDDILTT…KLVKSQLHDY (117 aa).

Belongs to the TRAFAC class myosin-kinesin ATPase superfamily. Kinesin family.

Its subcellular location is the cytoplasm. The protein localises to the cytoskeleton. The sequence is that of Kinesin-like protein 8 (klp8) from Schizosaccharomyces pombe (strain 972 / ATCC 24843) (Fission yeast).